The following is a 320-amino-acid chain: Pantothenate kinase (320 aa).

96-103 (GSVAVGKS) lines the ATP pocket.

It belongs to the prokaryotic pantothenate kinase family.

It is found in the cytoplasm. It carries out the reaction (R)-pantothenate + ATP = (R)-4'-phosphopantothenate + ADP + H(+). It participates in cofactor biosynthesis; coenzyme A biosynthesis; CoA from (R)-pantothenate: step 1/5. This Brevibacillus brevis (strain 47 / JCM 6285 / NBRC 100599) protein is Pantothenate kinase.